We begin with the raw amino-acid sequence, 78 residues long: Large ribosomal subunit protein bL28 (78 aa).

Belongs to the bacterial ribosomal protein bL28 family.

In Azoarcus sp. (strain BH72), this protein is Large ribosomal subunit protein bL28.